A 620-amino-acid polypeptide reads, in one-letter code: Probable indole-3-acetic acid-amido synthetase GH3.7 (620 aa).

The protein belongs to the IAA-amido conjugating enzyme family. In terms of tissue distribution, ubiquitous.

In terms of biological role, may catalyze the synthesis of indole-3-acetic acid (IAA)-amino acid conjugates, providing a mechanism for the plant to cope with the presence of excess auxin. This is Probable indole-3-acetic acid-amido synthetase GH3.7 (GH3.7) from Oryza sativa subsp. japonica (Rice).